Reading from the N-terminus, the 306-residue chain is Large ribosomal subunit protein bL19m (306 aa).

Residues 34–43 show a composition bias toward basic and acidic residues; it reads ENQEEQKKEA. The interval 34–53 is disordered; that stretch reads ENQEEQKKEAPPTTPTSPVN.

This sequence belongs to the bacterial ribosomal protein bL19 family. In terms of assembly, component of the mitochondrial ribosome large subunit (39S) which comprises a 16S rRNA and about 50 distinct proteins.

It is found in the mitochondrion. The polypeptide is Large ribosomal subunit protein bL19m (mRpL19) (Drosophila melanogaster (Fruit fly)).